Reading from the N-terminus, the 113-residue chain is Mitochondrial import inner membrane translocase subunit TIM14 (113 aa).

Over 1-4 the chain is Mitochondrial intermembrane; the sequence is MATP. Residues 5-22 form a helical membrane-spanning segment; that stretch reads IIVGATIAGIAYSSRFLI. The Mitochondrial matrix portion of the chain corresponds to 23–113; that stretch reads RVIQRAKSKQ…RNVLSSKNSN (91 aa). The 55-residue stretch at 59-113 folds into the J domain; that stretch reads EAANILGLKEESTKEEIKIRHKLLMIKNHPDKGGSSYLATKINEARNVLSSKNSN.

This sequence belongs to the TIM14 family. As to quaternary structure, interacts with PHB2; the interaction associates DNAJC19 with the prohibitin complex. Interacts with TIMM16/PAM16. May be a component of the PAM complex at least composed of a mitochondrial HSP70 protein, GRPEL1 or GRPEL2, TIMM44, TIMM16/PAM16 and TIMM14/DNAJC19.

It is found in the mitochondrion inner membrane. In terms of biological role, mitochondrial co-chaperone which forms a complex with prohibitins to regulate cardiolipin remodeling. May be a component of the PAM complex, a complex required for the translocation of transit peptide-containing proteins from the inner membrane into the mitochondrial matrix in an ATP-dependent manner. May act as a co-chaperone that stimulate the ATP-dependent activity. This is Mitochondrial import inner membrane translocase subunit TIM14 (dnajc19) from Dictyostelium discoideum (Social amoeba).